Here is a 219-residue protein sequence, read N- to C-terminus: Protein P25 (219 aa).

Residues 57 to 62 (KRIRFR) carry the Nuclear localization signal motif. The transcription activation stretch occupies residues 103 to 146 (DPTRLDSSVNELLVSNGLVTHYDRVHNVPIHTDGFEVVDFTTVF). The short motif at 169-178 (VYMVCLVNTV) is the Nuclear export signal element.

Belongs to the benyvirus P25 protein family. As to quaternary structure, homooligomer.

It is found in the host cytoplasm. Its subcellular location is the host nucleus. Pathogenicity factor implicated in symptom exacerbation. Might function as transcription activator (Potential). In Beet necrotic yellow vein virus (isolate Japan/S) (BNYVV), this protein is Protein P25.